Reading from the N-terminus, the 274-residue chain is Rhamnulose-1-phosphate aldolase (274 aa).

Glu-117 is a catalytic residue. Positions 141, 143, and 212 each coordinate Zn(2+).

Belongs to the aldolase class II family. RhaD subfamily. As to quaternary structure, homotetramer. The cofactor is Zn(2+).

The protein localises to the cytoplasm. The catalysed reaction is L-rhamnulose 1-phosphate = (S)-lactaldehyde + dihydroxyacetone phosphate. It functions in the pathway carbohydrate degradation; L-rhamnose degradation; glycerone phosphate from L-rhamnose: step 3/3. Its function is as follows. Catalyzes the reversible cleavage of L-rhamnulose-1-phosphate to dihydroxyacetone phosphate (DHAP) and L-lactaldehyde. In Escherichia coli O45:K1 (strain S88 / ExPEC), this protein is Rhamnulose-1-phosphate aldolase.